Reading from the N-terminus, the 290-residue chain is UPF0761 membrane protein CKO_03126 (290 aa).

6 consecutive transmembrane segments (helical) span residues Leu44–Phe64, Val104–Leu124, Phe140–Ile160, Val183–Thr203, Ala210–Leu230, and Val244–Leu264.

Belongs to the UPF0761 family.

It localises to the cell inner membrane. The sequence is that of UPF0761 membrane protein CKO_03126 from Citrobacter koseri (strain ATCC BAA-895 / CDC 4225-83 / SGSC4696).